Consider the following 434-residue polypeptide: Glutamate-1-semialdehyde 2,1-aminomutase 1 (434 aa).

Residue lysine 270 is modified to N6-(pyridoxal phosphate)lysine.

It belongs to the class-III pyridoxal-phosphate-dependent aminotransferase family. HemL subfamily. As to quaternary structure, homodimer. The cofactor is pyridoxal 5'-phosphate.

The protein localises to the cytoplasm. It catalyses the reaction (S)-4-amino-5-oxopentanoate = 5-aminolevulinate. It participates in porphyrin-containing compound metabolism; protoporphyrin-IX biosynthesis; 5-aminolevulinate from L-glutamyl-tRNA(Glu): step 2/2. The chain is Glutamate-1-semialdehyde 2,1-aminomutase 1 from Bacillus cereus (strain ATCC 10987 / NRS 248).